Consider the following 365-residue polypeptide: Cyclin-D5-2 (365 aa).

This sequence belongs to the cyclin family. Cyclin D subfamily.

This is Cyclin-D5-2 (CYCD5-2) from Oryza sativa subsp. japonica (Rice).